The primary structure comprises 143 residues: Large ribosomal subunit protein uL13 (143 aa).

It belongs to the universal ribosomal protein uL13 family. As to quaternary structure, part of the 50S ribosomal subunit.

Functionally, this protein is one of the early assembly proteins of the 50S ribosomal subunit, although it is not seen to bind rRNA by itself. It is important during the early stages of 50S assembly. The chain is Large ribosomal subunit protein uL13 from Prochlorococcus marinus subsp. pastoris (strain CCMP1986 / NIES-2087 / MED4).